A 488-amino-acid polypeptide reads, in one-letter code: Probable multidrug resistance protein NorM (488 aa).

The next 12 helical transmembrane spans lie at 11 to 31 (AILRLAGPLIAAQLAYVAMVF), 55 to 75 (YAFVSTFCVGVVAAVGNLVAI), 97 to 117 (AALALAAGLLLWNLRPLLLVF), 127 to 147 (AMQFLHSLTFALPGYMAFMVL), 159 to 179 (PVMAISVLGALANLALNYSFI), 190 to 210 (LAGIGLVTALVMNCMPLLLAL), 247 to 267 (GTYAVESGMFTVATLCMGIIG), 271 to 291 (LAAHQIAIQAVYVAFMVPVGL), 317 to 337 (VGIGFGALCMLLFAGLFWWMP), 355 to 375 (VAAMAVSLLAIAAWFELFDGT), 393 to 413 (FLVGLACYWLVGVPLACLLAF), and 421 to 441 (GVWWGLAGGLACAAIGLTLAF).

It belongs to the multi antimicrobial extrusion (MATE) (TC 2.A.66.1) family.

The protein localises to the cell inner membrane. Its function is as follows. Multidrug efflux pump. The sequence is that of Probable multidrug resistance protein NorM (norM) from Pseudomonas aeruginosa (strain ATCC 15692 / DSM 22644 / CIP 104116 / JCM 14847 / LMG 12228 / 1C / PRS 101 / PAO1).